The chain runs to 312 residues: Aspartate carbamoyltransferase catalytic subunit (312 aa).

Residues arginine 58 and threonine 59 each coordinate carbamoyl phosphate. Lysine 86 is an L-aspartate binding site. The carbamoyl phosphate site is built by arginine 108, histidine 136, and glutamine 139. Residues arginine 169 and arginine 223 each contribute to the L-aspartate site. Positions 264 and 265 each coordinate carbamoyl phosphate.

Belongs to the aspartate/ornithine carbamoyltransferase superfamily. ATCase family. As to quaternary structure, heterododecamer (2C3:3R2) of six catalytic PyrB chains organized as two trimers (C3), and six regulatory PyrI chains organized as three dimers (R2).

It catalyses the reaction carbamoyl phosphate + L-aspartate = N-carbamoyl-L-aspartate + phosphate + H(+). The protein operates within pyrimidine metabolism; UMP biosynthesis via de novo pathway; (S)-dihydroorotate from bicarbonate: step 2/3. Its function is as follows. Catalyzes the condensation of carbamoyl phosphate and aspartate to form carbamoyl aspartate and inorganic phosphate, the committed step in the de novo pyrimidine nucleotide biosynthesis pathway. This chain is Aspartate carbamoyltransferase catalytic subunit, found in Endomicrobium trichonymphae.